A 144-amino-acid polypeptide reads, in one-letter code: Large ribosomal subunit protein uL13 (144 aa).

Belongs to the universal ribosomal protein uL13 family. In terms of assembly, part of the 50S ribosomal subunit.

Functionally, this protein is one of the early assembly proteins of the 50S ribosomal subunit, although it is not seen to bind rRNA by itself. It is important during the early stages of 50S assembly. The protein is Large ribosomal subunit protein uL13 of Mesomycoplasma hyopneumoniae (strain 232) (Mycoplasma hyopneumoniae).